The primary structure comprises 196 residues: Ribonuclease HII (196 aa).

The region spanning 9 to 196 (GLVCGIDEAG…GPVARQLSLL (188 aa)) is the RNase H type-2 domain. The a divalent metal cation site is built by D15, E16, and D107.

This sequence belongs to the RNase HII family. Mn(2+) is required as a cofactor. Requires Mg(2+) as cofactor.

It localises to the cytoplasm. It catalyses the reaction Endonucleolytic cleavage to 5'-phosphomonoester.. Endonuclease that specifically degrades the RNA of RNA-DNA hybrids. The protein is Ribonuclease HII of Dechloromonas aromatica (strain RCB).